The chain runs to 378 residues: TelA-like protein SAUSA300_1299 (378 aa).

Belongs to the TelA family.

This Staphylococcus aureus (strain USA300) protein is TelA-like protein SAUSA300_1299.